An 810-amino-acid chain; its full sequence is DNA-binding protein REB1 (810 aa).

Basic and acidic residues-rich tracts occupy residues 1 to 10 (MPSGHNDKNA) and 29 to 44 (HQNH…LENK). Disordered regions lie at residues 1-80 (MPSG…ENIS), 114-161 (NQQD…GVDD), 180-243 (NNNN…TNND), 294-313 (HGLN…LSNS), and 346-365 (QDTQ…AGSV). Composition is skewed to low complexity over residues 51–64 (IVES…NNND) and 124–135 (NNNTDNGNDSNN). Positions 149–161 (DKNKKDAGVGVDD) are enriched in basic and acidic residues. Positions 180–191 (NNNNNNSIANDS) are enriched in low complexity. Basic and acidic residues predominate over residues 198-208 (HDNGNNHENSQ). Positions 346–355 (QDTQPHQQKS) are enriched in polar residues. S355 is modified (phosphoserine). One can recognise an HTH myb-type domain in the interval 470 to 523 (HIFEQRGKWTAEEEQELAKLCAEKEGQWAEIGKTLGRMPEDCRDRWRNYVKCGT). The segment at residues 497-519 (WAEIGKTLGRMPEDCRDRWRNYV) is a DNA-binding region (H-T-H motif). The tract at residues 572 to 667 (QNDHRNNDED…STHSKSLSNT (96 aa)) is disordered. The span at 586-606 (ASAAAAAAAAIQEQQQLLQQK) shows a compositional bias: low complexity. The span at 627–636 (DNKDEDKPHD) shows a compositional bias: basic and acidic residues. Positions 643–667 (DDNSQNSMVPAPSATSTHSKSLSNT) are enriched in polar residues. In terms of domain architecture, Myb-like spans 692–717 (NWTIVSERMGGTRSRIQCRYKWNKLV). A Glycyl lysine isopeptide (Lys-Gly) (interchain with G-Cter in SUMO) cross-link involves residue K807.

Its subcellular location is the nucleus. Functionally, DNA-binding protein that recognizes sites within both the enhancer and the promoter of rRNA transcription, as well as upstream of many genes transcribed by RNA polymerase II. It is essential for cell growth. May stimulate or inhibit transcription. Specifically recognizes the sequence 5'-CCGGGTA-3' or 5'-CGGGTRR-3' (where R is any purine). A member of the general regulatory factors (GRFs) which act as genome partitioners. Acts as a chromatin insulator which are known as STARs (Subtelomeric anti-silencing region). STARs prevent negative or positive transcription influence by extending across chromatin to a promoter. This is DNA-binding protein REB1 (REB1) from Saccharomyces cerevisiae (strain ATCC 204508 / S288c) (Baker's yeast).